The chain runs to 210 residues: Transcriptional regulator GfcR (210 aa).

A disordered region spans residues 39–60 (VERSGAATEPEPRAEPEGPDDI). The span at 48 to 60 (PEPRAEPEGPDDI) shows a compositional bias: basic and acidic residues.

This sequence belongs to the purine/pyrimidine phosphoribosyltransferase family. GfcR subfamily.

Interaction with effectors modulates GfcR activity. 2-keto-3-deoxy-6-phosphogluconate (KDPG), fructose-1,6-bisphosphate (FBP), 2-keto-3-deoxy-6-phosphogalactonate (KDPGal) and glycerol-3-phosphate (G3P), which are intermediates of sugar and glycerol degradation pathways, can act as inducer molecules. In terms of biological role, DNA-binding transcriptional regulator that functions as a regulator of central sugar catabolic pathways. Is both a local regulator of specific steps in the pathways for D-glucose and D-fructose degradation and a global regulator of hexose catabolism. In the presence of D-glucose, activates expression of the gene encoding the gluconate dehydratase (gad), which is involved in D-glucose catabolism via the semiphosphorylative Entner-Doudoroff (spED) pathway. In the presence of D-fructose, activates expression of the genes encoding the PTS system EIIC component (ptfC) and the fructose-1,6-bisphosphate aldolase (fba), which are involved in D-fructose uptake and degradation via the modified Embden-Meyerhof pathway. In addition, in the presence of D-glucose, D-fructose, D-galactose or glycerol, it activates expression of the genes encoding glyceraldehyde-3-phosphate dehydrogenase (gap) and pyruvate kinase (pykA), enzymes common to all four degradation pathways. Acts by binding directly to the promoter region of the regulated genes. The chain is Transcriptional regulator GfcR from Haloferax volcanii (strain ATCC 29605 / DSM 3757 / JCM 8879 / NBRC 14742 / NCIMB 2012 / VKM B-1768 / DS2) (Halobacterium volcanii).